The following is a 1034-amino-acid chain: MAVKNPFGFTTGPVTFWLIVVYAAFLIPLVWIHESVPAVPSSSKNPYPQLNVTEAWHDLTHITRKYHPYNSRANDEVGAYFMKRIEEILVRNKVEYTKEKDAGGVIWPQEAYDAPAPAKRDVQRRDSKGPAVTIFDDTISNTTYLGTSGSFNQAGAYGTYFEGTNKLVYIRGTLDEDGEWWNGKRDPRKIGQGGVLVNAHYDSVSSGYGATDDGMGCVSILQILNHYTSPGHQPMRGIVLLLNNGEEDGLYGAKVYHYSPLYYFTTSFVNLEGAGAGGRAILFRTTDLEVTKGYEGAPHPFGSVVAADGFKLGAIRSETDYKVWTESYGQRGLDIAFYRPRARYHTNQDDTRHASQESLWHMLSNSLAAVDNLQHTTGYFSGSRNDGDKKKVASGSGTDGVWFDMFGTGFAILELRGLFAWTLTLLIVSPLVLALVTYILSRKDKYYFFSRKVTADEDDEPVSVGGWKGFFRFPFALVLSASITVLSAFLIRRVNPHIIYSSPYAVWAMTLSLFFLVFWTIAKGASVVRPSALQRGYAHIWLFVISWVILVAVTAAADRFKIASGYPFAFFHSAVFVSALISLCDLFALPSKQEFARNAHNDQQTRDNISEVPNSDALISSRHSHVEDDVAEEPTETTPLRSGENGNGNNGTIRTTFATTYRRSLSAIMRTPDEEENKETEQQPYDHEQQWSANLPSWTWFFQLLLLAPITITVFLQIALFIVSAIHSAAADGNDPILVYAAIAAFSIIILLPATPFIHRASFYLPLFLLLVFFVTLIYNLVAFPFSAENRLKVRFQQTLDLDANTSVISITGLEKYTRKMIAELPSGAGQPVNCTPGYGLTSDCRYNGAAVMPNLPQFTHALPANVSKGRYANLVTVNISRSDSSSKLEFGIDAAESKVCNLAFDTPVSFNVRGSAGIDPIFSRPTEQGVRMLTLWRRDASIPWVVDVEPIKTKAVPAGVLAKSSDSDAGAVHEDLRVRKSAELSGTIACQWSDANVLGTIPAFDEALQFSPDWIAVTKASVGLVEGRKKFRA.

At 1-11 (MAVKNPFGFTT) the chain is on the cytoplasmic side. A helical transmembrane segment spans residues 12–32 (GPVTFWLIVVYAAFLIPLVWI). The Vacuolar segment spans residues 33–418 (HESVPAVPSS…GFAILELRGL (386 aa)). N-linked (GlcNAc...) asparagine glycans are attached at residues N51 and N141. Zn(2+) is bound by residues H200 and D212. Catalysis depends on E246, which acts as the Proton acceptor. Zn(2+)-binding residues include E247, E272, and H345. Residues 419-439 (FAWTLTLLIVSPLVLALVTYI) traverse the membrane as a helical segment. The Cytoplasmic portion of the chain corresponds to 440–470 (LSRKDKYYFFSRKVTADEDDEPVSVGGWKGF). The chain crosses the membrane as a helical span at residues 471–491 (FRFPFALVLSASITVLSAFLI). At 492-497 (RRVNPH) the chain is on the vacuolar side. Residues 498–518 (IIYSSPYAVWAMTLSLFFLVF) form a helical membrane-spanning segment. Topologically, residues 519 to 536 (WTIAKGASVVRPSALQRG) are cytoplasmic. Residues 537–557 (YAHIWLFVISWVILVAVTAAA) form a helical membrane-spanning segment. Topologically, residues 558–567 (DRFKIASGYP) are vacuolar. The helical transmembrane segment at 568-588 (FAFFHSAVFVSALISLCDLFA) threads the bilayer. Over 589 to 703 (LPSKQEFARN…NLPSWTWFFQ (115 aa)) the chain is Cytoplasmic. The segment at 623-653 (HSHVEDDVAEEPTETTPLRSGENGNGNNGTI) is disordered. A helical transmembrane segment spans residues 704–724 (LLLLAPITITVFLQIALFIVS). Residues 725–736 (AIHSAAADGNDP) lie on the Vacuolar side of the membrane. The helical transmembrane segment at 737–757 (ILVYAAIAAFSIIILLPATPF) threads the bilayer. Topologically, residues 758–762 (IHRAS) are cytoplasmic. A helical membrane pass occupies residues 763-783 (FYLPLFLLLVFFVTLIYNLVA). Residues 784–1034 (FPFSAENRLK…LVEGRKKFRA (251 aa)) lie on the Vacuolar side of the membrane. Residues N805, N866, and N879 are each glycosylated (N-linked (GlcNAc...) asparagine).

The protein belongs to the peptidase M28 family. Zn(2+) serves as cofactor.

The protein resides in the vacuole membrane. May be involved in vacuolar sorting and osmoregulation. The chain is Vacuolar membrane protease from Colletotrichum graminicola (strain M1.001 / M2 / FGSC 10212) (Maize anthracnose fungus).